The primary structure comprises 266 residues: Glucosamine-6-phosphate deaminase (266 aa).

The active-site Proton acceptor; for enolization step is D72. The For ring-opening step role is filled by D141. The active-site Proton acceptor; for ring-opening step is the H143. E148 functions as the For ring-opening step in the catalytic mechanism.

It belongs to the glucosamine/galactosamine-6-phosphate isomerase family. NagB subfamily. In terms of assembly, homohexamer.

The enzyme catalyses alpha-D-glucosamine 6-phosphate + H2O = beta-D-fructose 6-phosphate + NH4(+). The protein operates within amino-sugar metabolism; N-acetylneuraminate degradation; D-fructose 6-phosphate from N-acetylneuraminate: step 5/5. With respect to regulation, allosterically activated by N-acetylglucosamine 6-phosphate (GlcNAc6P). Catalyzes the reversible isomerization-deamination of glucosamine 6-phosphate (GlcN6P) to form fructose 6-phosphate (Fru6P) and ammonium ion. The polypeptide is Glucosamine-6-phosphate deaminase (Yersinia enterocolitica serotype O:8 / biotype 1B (strain NCTC 13174 / 8081)).